The following is a 281-amino-acid chain: Putative glutamine amidotransferase-like protein RP404 (281 aa).

The 263-residue stretch at 19–281 (KYTYADFPWY…KALVKASKYI (263 aa)) folds into the Glutamine amidotransferase type-1 domain. The 36-residue stretch at 139–174 (RHFSKLTYSKKFECNTEAFATTVYTLPIKLEFENAP) folds into the RPE1 insert domain.

The polypeptide is Putative glutamine amidotransferase-like protein RP404 (Rickettsia prowazekii (strain Madrid E)).